The primary structure comprises 113 residues: Iron-sulfur cluster insertion protein ErpA (113 aa).

Positions 41, 105, and 107 each coordinate iron-sulfur cluster.

The protein belongs to the HesB/IscA family. As to quaternary structure, homodimer. Requires iron-sulfur cluster as cofactor.

In terms of biological role, required for insertion of 4Fe-4S clusters for at least IspG. The protein is Iron-sulfur cluster insertion protein ErpA of Colwellia psychrerythraea (strain 34H / ATCC BAA-681) (Vibrio psychroerythus).